Reading from the N-terminus, the 55-residue chain is Large ribosomal subunit protein bL33B (55 aa).

The protein belongs to the bacterial ribosomal protein bL33 family.

The protein is Large ribosomal subunit protein bL33B of Salinispora arenicola (strain CNS-205).